Reading from the N-terminus, the 270-residue chain is MTEQRTVTNNATHYFYPTVLLFSILLTGGVLTATSFYNKHLRQYKSAKDIPEAIFKKQWLYGKVTSVGDGDNFHFFHTPSGIFGGWGWLRSIPELQTVAFDASVEVPQSVRWWNKLFSAKVANYKSHFMSLHVPYKGRRNLPTISVRLCGVDAPERSHFGKTAQPFSDEALNWLRYKILGQYVWVKPLAVDQYGRCVARVELWSWLKGWQNISIEMLKEGVGVVYEGKVGAEFDNQEDIYLYEELNSKKAKRGLWSQRKFETPGAYKKRT.

The helical transmembrane segment at 15 to 37 (FYPTVLLFSILLTGGVLTATSFY) threads the bilayer. Residues 58 to 257 (QWLYGKVTSV…KKAKRGLWSQ (200 aa)) enclose the TNase-like domain. Arg147 is a catalytic residue. A Ca(2+)-binding site is contributed by Asp152. Active-site residues include Glu155 and Arg195.

This sequence belongs to the LCL3 family.

It is found in the mitochondrion. It localises to the membrane. The sequence is that of Probable endonuclease LCL3 (LCL3) from Kluyveromyces lactis (strain ATCC 8585 / CBS 2359 / DSM 70799 / NBRC 1267 / NRRL Y-1140 / WM37) (Yeast).